A 361-amino-acid chain; its full sequence is Probable pectinesterase 49 (361 aa).

The N-terminal stretch at 1–22 is a signal peptide; the sequence is MGYISLALVALLVFFASPVVLA. N-linked (GlcNAc...) asparagine glycosylation occurs at Asn128. Gln174 provides a ligand contact to substrate. Asp197 (proton donor) is an active-site residue. Residue Asp218 is the Nucleophile of the active site. Residues Arg275 and Trp277 each coordinate substrate.

This sequence belongs to the pectinesterase family. Expressed in flower buds.

The protein resides in the secreted. Its subcellular location is the cell wall. The enzyme catalyses [(1-&gt;4)-alpha-D-galacturonosyl methyl ester](n) + n H2O = [(1-&gt;4)-alpha-D-galacturonosyl](n) + n methanol + n H(+). It participates in glycan metabolism; pectin degradation; 2-dehydro-3-deoxy-D-gluconate from pectin: step 1/5. Functionally, acts in the modification of cell walls via demethylesterification of cell wall pectin. In Arabidopsis thaliana (Mouse-ear cress), this protein is Probable pectinesterase 49 (PME49).